The following is a 90-amino-acid chain: Small ribosomal subunit protein uS15c (90 aa).

This sequence belongs to the universal ribosomal protein uS15 family. Part of the 30S ribosomal subunit.

It localises to the plastid. Its subcellular location is the chloroplast. This Piper cenocladum (Ant piper) protein is Small ribosomal subunit protein uS15c (rps15).